The primary structure comprises 205 residues: Outer-membrane lipoprotein carrier protein (205 aa).

An N-terminal signal peptide occupies residues 1–21; that stretch reads MRFLAVATMVVALMVPWSVRA.

This sequence belongs to the LolA family. As to quaternary structure, monomer.

The protein localises to the periplasm. In terms of biological role, participates in the translocation of lipoproteins from the inner membrane to the outer membrane. Only forms a complex with a lipoprotein if the residue after the N-terminal Cys is not an aspartate (The Asp acts as a targeting signal to indicate that the lipoprotein should stay in the inner membrane). The polypeptide is Outer-membrane lipoprotein carrier protein (Methylobacillus flagellatus (strain ATCC 51484 / DSM 6875 / VKM B-1610 / KT)).